Here is a 206-residue protein sequence, read N- to C-terminus: FMN-dependent NADH:quinone oxidoreductase (206 aa).

Residues Ser-10, 16–18 (SSS), 93–96 (MYNF), and 137–140 (TRGG) contribute to the FMN site.

The protein belongs to the azoreductase type 1 family. As to quaternary structure, homodimer. Requires FMN as cofactor.

The enzyme catalyses 2 a quinone + NADH + H(+) = 2 a 1,4-benzosemiquinone + NAD(+). The catalysed reaction is N,N-dimethyl-1,4-phenylenediamine + anthranilate + 2 NAD(+) = 2-(4-dimethylaminophenyl)diazenylbenzoate + 2 NADH + 2 H(+). In terms of biological role, quinone reductase that provides resistance to thiol-specific stress caused by electrophilic quinones. Also exhibits azoreductase activity. Catalyzes the reductive cleavage of the azo bond in aromatic azo compounds to the corresponding amines. In Psychromonas ingrahamii (strain DSM 17664 / CCUG 51855 / 37), this protein is FMN-dependent NADH:quinone oxidoreductase.